We begin with the raw amino-acid sequence, 268 residues long: Large ribosomal subunit protein mL46 (268 aa).

The N-terminal 25 residues, 1 to 25 (MYLKRNIINMQRSFSRQFHISVRNS), are a transit peptide targeting the mitochondrion.

Belongs to the mitochondrion-specific ribosomal protein mL46 family. Component of the mitochondrial large ribosomal subunit (mt-LSU). Mature yeast 74S mitochondrial ribosomes consist of a small (37S) and a large (54S) subunit. The 37S small subunit contains a 15S ribosomal RNA (15S mt-rRNA) and at least 32 different proteins. The 54S large subunit contains a 21S rRNA (21S mt-rRNA) and at least 45 different proteins.

It is found in the mitochondrion. Its function is as follows. Component of the mitochondrial ribosome (mitoribosome), a dedicated translation machinery responsible for the synthesis of mitochondrial genome-encoded proteins, including at least some of the essential transmembrane subunits of the mitochondrial respiratory chain. The mitoribosomes are attached to the mitochondrial inner membrane and translation products are cotranslationally integrated into the membrane. The polypeptide is Large ribosomal subunit protein mL46 (mrpl17) (Schizosaccharomyces pombe (strain 972 / ATCC 24843) (Fission yeast)).